Here is a 264-residue protein sequence, read N- to C-terminus: Tryptophan synthase alpha chain (264 aa).

Catalysis depends on proton acceptor residues Glu-45 and Asp-56.

Belongs to the TrpA family. Tetramer of two alpha and two beta chains.

It catalyses the reaction (1S,2R)-1-C-(indol-3-yl)glycerol 3-phosphate + L-serine = D-glyceraldehyde 3-phosphate + L-tryptophan + H2O. It participates in amino-acid biosynthesis; L-tryptophan biosynthesis; L-tryptophan from chorismate: step 5/5. In terms of biological role, the alpha subunit is responsible for the aldol cleavage of indoleglycerol phosphate to indole and glyceraldehyde 3-phosphate. The polypeptide is Tryptophan synthase alpha chain (Leptospira interrogans serogroup Icterohaemorrhagiae serovar copenhageni (strain Fiocruz L1-130)).